A 379-amino-acid chain; its full sequence is Epoxyqueuosine reductase (379 aa).

Asp139 acts as the Proton donor in catalysis. Residues 181–213 (IPLPVDQPVEEGCGKCVACMTICPTGAIVEPYT) form the 4Fe-4S ferredoxin-type domain. [4Fe-4S] cluster-binding residues include Cys193, Cys196, Cys199, Cys203, Cys219, Cys246, Cys249, and Cys253.

This sequence belongs to the QueG family. As to quaternary structure, monomer. Cob(II)alamin is required as a cofactor. [4Fe-4S] cluster serves as cofactor.

It is found in the cytoplasm. The catalysed reaction is epoxyqueuosine(34) in tRNA + AH2 = queuosine(34) in tRNA + A + H2O. It participates in tRNA modification; tRNA-queuosine biosynthesis. Catalyzes the conversion of epoxyqueuosine (oQ) to queuosine (Q), which is a hypermodified base found in the wobble positions of tRNA(Asp), tRNA(Asn), tRNA(His) and tRNA(Tyr). The sequence is that of Epoxyqueuosine reductase from Shigella dysenteriae serotype 1 (strain Sd197).